The sequence spans 198 residues: Na(+)-translocating NADH-quinone reductase subunit E (198 aa).

The next 6 helical transmembrane spans lie at 11-31 (AVFI…FLAV), 35-55 (VSPA…AVPV), 77-97 (FLNF…LEMV), 110-130 (GIFL…SFMV), 140-160 (IVYG…LAGL), and 176-196 (LGIT…FSGI).

It belongs to the NqrDE/RnfAE family. In terms of assembly, composed of six subunits; NqrA, NqrB, NqrC, NqrD, NqrE and NqrF.

It is found in the cell inner membrane. The enzyme catalyses a ubiquinone + n Na(+)(in) + NADH + H(+) = a ubiquinol + n Na(+)(out) + NAD(+). Functionally, NQR complex catalyzes the reduction of ubiquinone-1 to ubiquinol by two successive reactions, coupled with the transport of Na(+) ions from the cytoplasm to the periplasm. NqrA to NqrE are probably involved in the second step, the conversion of ubisemiquinone to ubiquinol. This Haemophilus influenzae (strain ATCC 51907 / DSM 11121 / KW20 / Rd) protein is Na(+)-translocating NADH-quinone reductase subunit E.